We begin with the raw amino-acid sequence, 147 residues long: Large ribosomal subunit protein uL15 (147 aa).

The span at 1 to 10 shows a compositional bias: polar residues; it reads MYLNTLSPNS. Residues 1–48 are disordered; sequence MYLNTLSPNSKSHKKSKRVGRGIGSGFGKTSGRGHKGQKSRSGCKIRR. Residues 11–20 show a composition bias toward basic residues; it reads KSHKKSKRVG. Positions 21–31 are enriched in gly residues; that stretch reads RGIGSGFGKTS. Residues 32-47 are compositionally biased toward basic residues; that stretch reads GRGHKGQKSRSGCKIR.

Belongs to the universal ribosomal protein uL15 family. Part of the 50S ribosomal subunit.

Functionally, binds to the 23S rRNA. This Buchnera aphidicola subsp. Baizongia pistaciae (strain Bp) protein is Large ribosomal subunit protein uL15.